The primary structure comprises 1081 residues: Importin-4 (1081 aa).

The residue at position 1 (methionine 1) is an N-acetylmethionine. The Importin N-terminal domain maps to 24–90 (ATEQLQIVLR…KSLILTALQR (67 aa)). HEAT repeat units follow at residues 348–385 (KLCP…GAGD), 390–427 (RLLP…NLQP), 431–471 (SYSR…NLGP), 475–513 (PYLP…AAQA), 895–932 (QFVS…HGGH), and 936–974 (EHFP…ASPT).

This sequence belongs to the importin beta family. Found in a cytosolic complex with ASF1 (ASF1A or ASF1B) and histones H3 and H4.

The protein localises to the cytoplasm. It localises to the nucleus. Its function is as follows. Nuclear transport receptor that mediates nuclear import of proteins, such as histones, RPS3A, TNP2 and VDR. Serves as receptor for nuclear localization signals (NLS) in cargo substrates. Is thought to mediate docking of the importin/substrate complex to the nuclear pore complex (NPC) through binding to nucleoporin and the complex is subsequently translocated through the pore by an energy requiring, Ran-dependent mechanism. At the nucleoplasmic side of the NPC, Ran binds to the importin, the importin/substrate complex dissociates and importin is re-exported from the nucleus to the cytoplasm where GTP hydrolysis releases Ran. The directionality of nuclear import is thought to be conferred by an asymmetric distribution of the GTP- and GDP-bound forms of Ran between the cytoplasm and nucleus. Mediates the nuclear import of the histone H3-H4 dimer when in complex with ASF1 (ASF1A or ASF1B). Mediates the ligand-independent nuclear import of vitamin D receptor (VDR). In vitro, mediates the nuclear import of human cytomegalovirus UL84 by recognizing a non-classical NLS. The chain is Importin-4 (IPO4) from Homo sapiens (Human).